Reading from the N-terminus, the 134-residue chain is Cell division protein SepF (134 aa).

It belongs to the SepF family. In terms of assembly, homodimer. Interacts with FtsZ.

It is found in the cytoplasm. In terms of biological role, cell division protein that is part of the divisome complex and is recruited early to the Z-ring. Probably stimulates Z-ring formation, perhaps through the cross-linking of FtsZ protofilaments. Its function overlaps with FtsA. This Caldanaerobacter subterraneus subsp. tengcongensis (strain DSM 15242 / JCM 11007 / NBRC 100824 / MB4) (Thermoanaerobacter tengcongensis) protein is Cell division protein SepF.